We begin with the raw amino-acid sequence, 493 residues long: Neuronal pentraxin receptor (493 aa).

The Cytoplasmic portion of the chain corresponds to 1 to 2; that stretch reads MK. The chain crosses the membrane as a helical; Signal-anchor for type II membrane protein span at residues 3-23; sequence FLAVLLAAGMLAFLGAVICII. The Extracellular segment spans residues 24–493; the sequence is ASVPLAASPA…FDVCKGRAKA (470 aa). Residues 37–72 are disordered; that stretch reads PGGTDNASAASAAGGSGPQRSLSALHSAGGSAGPSV. Asn42 carries an N-linked (GlcNAc...) asparagine glycan. The segment covering 57–72 has biased composition (low complexity); sequence SLSALHSAGGSAGPSV. Residue Asn211 is glycosylated (N-linked (GlcNAc...) asparagine). A Pentraxin (PTX) domain is found at 285–487; sequence DAFKVSIPIR…GAKKAAFDVC (203 aa). Cysteines 315 and 376 form a disulfide. Ca(2+) is bound by residues Asn340, Glu418, Gln419, Asp420, and Gln430. Asn456 is a glycosylation site (N-linked (GlcNAc...) asparagine).

As to quaternary structure, heteropentamer with NPTX1 and/or NPTX2. Also binds taipoxin-associated calcium-binding protein 49 (TCBP49/RCN2). Interacts with KLHL2. Ca(2+) is required as a cofactor. Post-translationally, ubiquitinated by a cullin-RING-based BCR (BTB-CUL3-RBX1) E3 ubiquitin-protein ligase complex containing KLHL2.

The protein resides in the membrane. In terms of biological role, may be involved in mediating uptake of synaptic material during synapse remodeling or in mediating the synaptic clustering of AMPA glutamate receptors at a subset of excitatory synapses. The protein is Neuronal pentraxin receptor (Nptxr) of Mus musculus (Mouse).